Reading from the N-terminus, the 315-residue chain is MTNQFSSTHFLNITENSEKQRIDNFLRKTFKRLPFNLICKIIRTGQIRINKKRINQNYKLKLGDSVRIPPITIQSDSNKKIKLNTRLSIIFNNMILYEDNYFLILNKPSGMSVHSGSGINYGMIENLRILRPYNRYLDLVHRLDRDTSGVLIIAKKRSILRNLHEQLREKKIKKKYVALVHGVWPDILKSISKPLLKTSSRKNKNIVKIDPKGKESITHFNIKKKYTKNTLISITPITGRTHQIRVHLLHLNYPIVLDAKYGIKKLDYFIKNKFNINRLLLHAESINFFHPKRKKNILITAPLDYVFKTVLKNLI.

Residues 20–90 (QRIDNFLRKT…IKLNTRLSII (71 aa)) form the S4 RNA-binding domain. D144 is an active-site residue.

Belongs to the pseudouridine synthase RluA family.

The catalysed reaction is uridine(955/2504/2580) in 23S rRNA = pseudouridine(955/2504/2580) in 23S rRNA. Its function is as follows. Responsible for synthesis of pseudouridine from uracil at positions 955, 2504 and 2580 in 23S ribosomal RNA. The polypeptide is Ribosomal large subunit pseudouridine synthase C (rluC) (Buchnera aphidicola subsp. Baizongia pistaciae (strain Bp)).